We begin with the raw amino-acid sequence, 155 residues long: Small ribosomal subunit protein uS7cz/uS7cy (155 aa).

It belongs to the universal ribosomal protein uS7 family. Part of the 30S ribosomal subunit.

Its subcellular location is the plastid. It is found in the chloroplast. In terms of biological role, one of the primary rRNA binding proteins, it binds directly to 16S rRNA where it nucleates assembly of the head domain of the 30S subunit. This Phalaenopsis aphrodite subsp. formosana (Moth orchid) protein is Small ribosomal subunit protein uS7cz/uS7cy (rps7-A).